Here is a 292-residue protein sequence, read N- to C-terminus: Ribosomal protein L11 methyltransferase (292 aa).

Residues T143, G164, D186, and N228 each contribute to the S-adenosyl-L-methionine site.

This sequence belongs to the methyltransferase superfamily. PrmA family.

The protein localises to the cytoplasm. It carries out the reaction L-lysyl-[protein] + 3 S-adenosyl-L-methionine = N(6),N(6),N(6)-trimethyl-L-lysyl-[protein] + 3 S-adenosyl-L-homocysteine + 3 H(+). Methylates ribosomal protein L11. This Aeromonas hydrophila subsp. hydrophila (strain ATCC 7966 / DSM 30187 / BCRC 13018 / CCUG 14551 / JCM 1027 / KCTC 2358 / NCIMB 9240 / NCTC 8049) protein is Ribosomal protein L11 methyltransferase.